The chain runs to 83 residues: Cytochrome b559 subunit alpha (83 aa).

A helical membrane pass occupies residues 21 to 35; the sequence is VIHSITIPSLFIAGW. Histidine 23 is a heme binding site.

Belongs to the PsbE/PsbF family. As to quaternary structure, heterodimer of an alpha subunit and a beta subunit. PSII is composed of 1 copy each of membrane proteins PsbA, PsbB, PsbC, PsbD, PsbE, PsbF, PsbH, PsbI, PsbJ, PsbK, PsbL, PsbM, PsbT, PsbX, PsbY, PsbZ, Psb30/Ycf12, at least 3 peripheral proteins of the oxygen-evolving complex and a large number of cofactors. It forms dimeric complexes. Heme b serves as cofactor.

The protein resides in the plastid. It is found in the chloroplast thylakoid membrane. Functionally, this b-type cytochrome is tightly associated with the reaction center of photosystem II (PSII). PSII is a light-driven water:plastoquinone oxidoreductase that uses light energy to abstract electrons from H(2)O, generating O(2) and a proton gradient subsequently used for ATP formation. It consists of a core antenna complex that captures photons, and an electron transfer chain that converts photonic excitation into a charge separation. This is Cytochrome b559 subunit alpha from Panax ginseng (Korean ginseng).